A 554-amino-acid polypeptide reads, in one-letter code: Oxygen-dependent choline dehydrogenase (554 aa).

An FAD-binding site is contributed by 4-33; the sequence is DYIIIGAGSAGNVLATRLTEDPNTTVLLLE. The active-site Proton acceptor is H473.

Belongs to the GMC oxidoreductase family. FAD is required as a cofactor.

It catalyses the reaction choline + A = betaine aldehyde + AH2. The enzyme catalyses betaine aldehyde + NAD(+) + H2O = glycine betaine + NADH + 2 H(+). It functions in the pathway amine and polyamine biosynthesis; betaine biosynthesis via choline pathway; betaine aldehyde from choline (cytochrome c reductase route): step 1/1. Functionally, involved in the biosynthesis of the osmoprotectant glycine betaine. Catalyzes the oxidation of choline to betaine aldehyde and betaine aldehyde to glycine betaine at the same rate. The protein is Oxygen-dependent choline dehydrogenase of Klebsiella pneumoniae (strain 342).